The sequence spans 538 residues: Phosphoenolpyruvate carboxykinase (ATP) (538 aa).

Substrate is bound by residues arginine 61, tyrosine 195, and lysine 201. Residues lysine 201, histidine 220, and 236–244 each bind ATP; that span reads GLSGTGKTT. Positions 201 and 220 each coordinate Mn(2+). Aspartate 257 is a Mn(2+) binding site. Positions 285, 323, and 449 each coordinate ATP. Arginine 323 contacts substrate.

This sequence belongs to the phosphoenolpyruvate carboxykinase (ATP) family. The cofactor is Mn(2+).

The protein resides in the cytoplasm. The enzyme catalyses oxaloacetate + ATP = phosphoenolpyruvate + ADP + CO2. Its pathway is carbohydrate biosynthesis; gluconeogenesis. Involved in the gluconeogenesis. Catalyzes the conversion of oxaloacetate (OAA) to phosphoenolpyruvate (PEP) through direct phosphoryl transfer between the nucleoside triphosphate and OAA. This is Phosphoenolpyruvate carboxykinase (ATP) from Nitrobacter winogradskyi (strain ATCC 25391 / DSM 10237 / CIP 104748 / NCIMB 11846 / Nb-255).